Consider the following 191-residue polypeptide: Elongation factor P (191 aa).

Position 34 is an N6-(3,6-diaminohexanoyl)-5-hydroxylysine (Lys-34).

The protein belongs to the elongation factor P family. In terms of processing, may be beta-lysylated on the epsilon-amino group of Lys-34 by the combined action of EpmA and EpmB, and then hydroxylated on the C5 position of the same residue by EpmC (if this protein is present). Lysylation is critical for the stimulatory effect of EF-P on peptide-bond formation. The lysylation moiety may extend toward the peptidyltransferase center and stabilize the terminal 3-CCA end of the tRNA. Hydroxylation of the C5 position on Lys-34 may allow additional potential stabilizing hydrogen-bond interactions with the P-tRNA.

It is found in the cytoplasm. The protein operates within protein biosynthesis; polypeptide chain elongation. In terms of biological role, involved in peptide bond synthesis. Alleviates ribosome stalling that occurs when 3 or more consecutive Pro residues or the sequence PPG is present in a protein, possibly by augmenting the peptidyl transferase activity of the ribosome. Modification of Lys-34 is required for alleviation. This is Elongation factor P from Colwellia psychrerythraea (strain 34H / ATCC BAA-681) (Vibrio psychroerythus).